The following is a 143-amino-acid chain: Large ribosomal subunit protein uL11 (143 aa).

This sequence belongs to the universal ribosomal protein uL11 family. Part of the ribosomal stalk of the 50S ribosomal subunit. Interacts with L10 and the large rRNA to form the base of the stalk. L10 forms an elongated spine to which L12 dimers bind in a sequential fashion forming a multimeric L10(L12)X complex. Post-translationally, one or more lysine residues are methylated.

Forms part of the ribosomal stalk which helps the ribosome interact with GTP-bound translation factors. The polypeptide is Large ribosomal subunit protein uL11 (Allorhizobium ampelinum (strain ATCC BAA-846 / DSM 112012 / S4) (Agrobacterium vitis (strain S4))).